Here is a 391-residue protein sequence, read N- to C-terminus: MTNQTRNVVVVDCLRTPMGRSKGGAFRHTRAEDLSAHLMKGILARNPQVNPSEIEDIYWGCVQQTLEQGFNIARNAALLAGLPIEIGAVTVNRLCGSSMQALHDGTRAIMTGDAEICLIGGVEHMGHVPMNHGVDFHPGMSKNVAKAAGMMGLTAEMLGKLHGISREQQDEFAARSHARAHAATLEGRFKNEILPTEGHAADGTLFQLDYDEVIRPETTVEGLSQLRPVFDPANGTVTAGTSSALSDGASAMLIMSEEKANELGLKIRARIKGMAIAGCDPSIMGYGPVPATQKALKRAGLAIEDMDVVELNEAFAAQSLPCAKDLGLLEVMDEKVNLNGGAIALGHPLGCSGARISTTLINLMEAKDAKYGLATMCIGLGQGIATVFERP.

Cys-95 (acyl-thioester intermediate) is an active-site residue. Active-site proton acceptor residues include His-347 and Cys-377.

It belongs to the thiolase-like superfamily. Thiolase family. As to quaternary structure, heterotetramer of two alpha chains (FadB) and two beta chains (FadA).

Its subcellular location is the cytoplasm. The enzyme catalyses an acyl-CoA + acetyl-CoA = a 3-oxoacyl-CoA + CoA. It participates in lipid metabolism; fatty acid beta-oxidation. In terms of biological role, catalyzes the final step of fatty acid oxidation in which acetyl-CoA is released and the CoA ester of a fatty acid two carbons shorter is formed. This is 3-ketoacyl-CoA thiolase from Vibrio parahaemolyticus serotype O3:K6 (strain RIMD 2210633).